Reading from the N-terminus, the 202-residue chain is Peptidyl-tRNA hydrolase (202 aa).

Tyr-14 is a binding site for tRNA. The active-site Proton acceptor is the His-19. TRNA is bound by residues Tyr-64, Asn-66, and Asn-112.

It belongs to the PTH family. In terms of assembly, monomer.

It localises to the cytoplasm. It catalyses the reaction an N-acyl-L-alpha-aminoacyl-tRNA + H2O = an N-acyl-L-amino acid + a tRNA + H(+). Functionally, hydrolyzes ribosome-free peptidyl-tRNAs (with 1 or more amino acids incorporated), which drop off the ribosome during protein synthesis, or as a result of ribosome stalling. Catalyzes the release of premature peptidyl moieties from peptidyl-tRNA molecules trapped in stalled 50S ribosomal subunits, and thus maintains levels of free tRNAs and 50S ribosomes. The sequence is that of Peptidyl-tRNA hydrolase from Nitrobacter winogradskyi (strain ATCC 25391 / DSM 10237 / CIP 104748 / NCIMB 11846 / Nb-255).